A 368-amino-acid polypeptide reads, in one-letter code: Probable dual-specificity RNA methyltransferase RlmN (368 aa).

The active-site Proton acceptor is glutamate 111. Positions 117 to 355 constitute a Radical SAM core domain; sequence YPNRATLCIS…CTVRDTRGQE (239 aa). Cysteine 124 and cysteine 360 are oxidised to a cystine. Positions 131, 135, and 138 each coordinate [4Fe-4S] cluster. S-adenosyl-L-methionine is bound by residues 181–182, serine 215, 238–240, and asparagine 317; these read GE and SLH. The active-site S-methylcysteine intermediate is cysteine 360.

Belongs to the radical SAM superfamily. RlmN family. The cofactor is [4Fe-4S] cluster.

Its subcellular location is the cytoplasm. The enzyme catalyses adenosine(2503) in 23S rRNA + 2 reduced [2Fe-2S]-[ferredoxin] + 2 S-adenosyl-L-methionine = 2-methyladenosine(2503) in 23S rRNA + 5'-deoxyadenosine + L-methionine + 2 oxidized [2Fe-2S]-[ferredoxin] + S-adenosyl-L-homocysteine. The catalysed reaction is adenosine(37) in tRNA + 2 reduced [2Fe-2S]-[ferredoxin] + 2 S-adenosyl-L-methionine = 2-methyladenosine(37) in tRNA + 5'-deoxyadenosine + L-methionine + 2 oxidized [2Fe-2S]-[ferredoxin] + S-adenosyl-L-homocysteine. Specifically methylates position 2 of adenine 2503 in 23S rRNA and position 2 of adenine 37 in tRNAs. This chain is Probable dual-specificity RNA methyltransferase RlmN, found in Corynebacterium diphtheriae (strain ATCC 700971 / NCTC 13129 / Biotype gravis).